The primary structure comprises 345 residues: Fructose-bisphosphate aldolase, plasmid (345 aa).

Serine 50 contacts D-glyceraldehyde 3-phosphate. The active-site Proton donor is aspartate 83. Zn(2+) is bound by residues histidine 84, aspartate 105, glutamate 142, and histidine 198. Glycine 199 contacts dihydroxyacetone phosphate. Histidine 232 provides a ligand contact to Zn(2+). Residues 233–235 and 275–278 contribute to the dihydroxyacetone phosphate site; these read GSS and NIDT.

The protein belongs to the class II fructose-bisphosphate aldolase family. In terms of assembly, homodimer. Zn(2+) serves as cofactor.

The catalysed reaction is beta-D-fructose 1,6-bisphosphate = D-glyceraldehyde 3-phosphate + dihydroxyacetone phosphate. Its pathway is carbohydrate biosynthesis; Calvin cycle. It functions in the pathway carbohydrate degradation; glycolysis; D-glyceraldehyde 3-phosphate and glycerone phosphate from D-glucose: step 4/4. Its function is as follows. Catalyzes the aldol condensation of dihydroxyacetone phosphate (DHAP or glycerone-phosphate) with glyceraldehyde 3-phosphate (G3P) to form fructose 1,6-bisphosphate (FBP) in gluconeogenesis and the reverse reaction in glycolysis. This is Fructose-bisphosphate aldolase, plasmid (cbbAP) from Cupriavidus necator (strain ATCC 17699 / DSM 428 / KCTC 22496 / NCIMB 10442 / H16 / Stanier 337) (Ralstonia eutropha).